Here is a 263-residue protein sequence, read N- to C-terminus: Killer cell lectin-like receptor 4 (263 aa).

Residues 1–44 (MTEQEDTFSAVRFHKSSGLQNEMRLKETRKPEKARLRVCSVPWQ) are Cytoplasmic-facing. A helical; Signal-anchor for type II membrane protein transmembrane segment spans residues 45–65 (LIVIALGILISLRLVTVAVLM). Topologically, residues 66-263 (TNIFQYGQQK…CGKRLDKFPH (198 aa)) are extracellular. N87 and N104 each carry an N-linked (GlcNAc...) asparagine glycan. One can recognise a C-type lectin domain in the interval 139-258 (GVKVYWFCYG…SFICICGKRL (120 aa)). 4 cysteine pairs are disulfide-bonded: C146-C151, C164-C252, C168-C254, and C233-C246. 2 N-linked (GlcNAc...) asparagine glycosylation sites follow: N170 and N222.

In terms of assembly, homodimer; disulfide-linked. Interacts with the adapter protein TYROBP/DAP12; the interaction leads to natural killer cell activation.

It is found in the cell membrane. Functionally, receptor on natural killer (NK) cells for class I MHC. The protein is Killer cell lectin-like receptor 4 (Klra4) of Mus musculus (Mouse).